The chain runs to 452 residues: Phosphoglucosamine mutase (452 aa).

Serine 108 (phosphoserine intermediate) is an active-site residue. Residues serine 108, aspartate 247, aspartate 249, and aspartate 251 each coordinate Mg(2+). At serine 108 the chain carries Phosphoserine.

It belongs to the phosphohexose mutase family. The cofactor is Mg(2+). Post-translationally, activated by phosphorylation.

The catalysed reaction is alpha-D-glucosamine 1-phosphate = D-glucosamine 6-phosphate. Catalyzes the conversion of glucosamine-6-phosphate to glucosamine-1-phosphate. This is Phosphoglucosamine mutase from Burkholderia pseudomallei (strain K96243).